A 622-amino-acid chain; its full sequence is Phosphomethylpyrimidine synthase (622 aa).

The disordered stretch occupies residues 109–130; that stretch reads EPISNNNNDRQSSDKQLSFTTN. Residues asparagine 234, methionine 263, tyrosine 292, histidine 328, 348–350, 389–392, and glutamate 428 contribute to the substrate site; these read SRG and DGLR. Position 432 (histidine 432) interacts with Zn(2+). Tyrosine 455 lines the substrate pocket. Residue histidine 496 participates in Zn(2+) binding. Residues cysteine 576, cysteine 579, and cysteine 584 each coordinate [4Fe-4S] cluster.

It belongs to the ThiC family. Homodimer. Requires [4Fe-4S] cluster as cofactor.

It catalyses the reaction 5-amino-1-(5-phospho-beta-D-ribosyl)imidazole + S-adenosyl-L-methionine = 4-amino-2-methyl-5-(phosphooxymethyl)pyrimidine + CO + 5'-deoxyadenosine + formate + L-methionine + 3 H(+). Its pathway is cofactor biosynthesis; thiamine diphosphate biosynthesis. In terms of biological role, catalyzes the synthesis of the hydroxymethylpyrimidine phosphate (HMP-P) moiety of thiamine from aminoimidazole ribotide (AIR) in a radical S-adenosyl-L-methionine (SAM)-dependent reaction. This chain is Phosphomethylpyrimidine synthase, found in Baumannia cicadellinicola subsp. Homalodisca coagulata.